Reading from the N-terminus, the 233-residue chain is Large ribosomal subunit protein uL1 (233 aa).

This sequence belongs to the universal ribosomal protein uL1 family. Part of the 50S ribosomal subunit.

Functionally, binds directly to 23S rRNA. The L1 stalk is quite mobile in the ribosome, and is involved in E site tRNA release. Protein L1 is also a translational repressor protein, it controls the translation of the L11 operon by binding to its mRNA. The protein is Large ribosomal subunit protein uL1 of Thermotoga maritima (strain ATCC 43589 / DSM 3109 / JCM 10099 / NBRC 100826 / MSB8).